A 372-amino-acid chain; its full sequence is GTPase Obg (372 aa).

Residues methionine 1–leucine 159 form the Obg domain. The OBG-type G domain occupies alanine 160–aspartate 336. GTP contacts are provided by residues glycine 166–serine 173, phenylalanine 191–histidine 195, aspartate 213–glycine 216, asparagine 288–aspartate 291, and serine 317–leucine 319. Mg(2+) contacts are provided by serine 173 and threonine 193. The disordered stretch occupies residues lysine 341–aspartate 372.

This sequence belongs to the TRAFAC class OBG-HflX-like GTPase superfamily. OBG GTPase family. Monomer. Mg(2+) serves as cofactor.

The protein localises to the cytoplasm. An essential GTPase which binds GTP, GDP and possibly (p)ppGpp with moderate affinity, with high nucleotide exchange rates and a fairly low GTP hydrolysis rate. Plays a role in control of the cell cycle, stress response, ribosome biogenesis and in those bacteria that undergo differentiation, in morphogenesis control. This chain is GTPase Obg, found in Bordetella avium (strain 197N).